Consider the following 244-residue polypeptide: 5-oxoprolinase subunit A (244 aa).

The protein belongs to the LamB/PxpA family. Forms a complex composed of PxpA, PxpB and PxpC.

The enzyme catalyses 5-oxo-L-proline + ATP + 2 H2O = L-glutamate + ADP + phosphate + H(+). Functionally, catalyzes the cleavage of 5-oxoproline to form L-glutamate coupled to the hydrolysis of ATP to ADP and inorganic phosphate. The chain is 5-oxoprolinase subunit A from Escherichia coli O6:K15:H31 (strain 536 / UPEC).